A 37-amino-acid polypeptide reads, in one-letter code: Trypsin inhibitor 3 (37 aa).

Cystine bridges form between C4/C21, C11/C25, and C20/C36.

Trypsin inhibitor. In Spinacia oleracea (Spinach), this protein is Trypsin inhibitor 3.